Here is an 83-residue protein sequence, read N- to C-terminus: Antitoxin ParD1 (83 aa).

The stretch at Ile-33–Ser-60 forms a coiled coil. Residues Leu-54–Arg-83 are disordered.

It belongs to the ParD antitoxin family.

Functionally, antitoxin component of a type II toxin-antitoxin (TA) system. The chain is Antitoxin ParD1 (parD1) from Mycobacterium tuberculosis (strain CDC 1551 / Oshkosh).